The sequence spans 214 residues: Adenylate kinase (214 aa).

Position 14–19 (14–19 (GSGKGT)) interacts with ATP. Residues 32 to 61 (SVGKVLRTVMESNTAEADVVKKFIKSGKLV) form an NMP region. Residues R38, 59-61 (KLV), 87-90 (GYPR), and Q94 each bind AMP. The tract at residues 124–162 (GRISCTDCGTIYNKLYCMPKINGVCDICNSSSFQNRVDD) is LID. An ATP-binding site is contributed by R125. 2 residues coordinate Zn(2+): C128 and C131. An ATP-binding site is contributed by 134–135 (IY). Positions 148 and 151 each coordinate Zn(2+). AMP-binding residues include R159 and R170. Q198 provides a ligand contact to ATP.

It belongs to the adenylate kinase family. Monomer.

The protein localises to the cytoplasm. It carries out the reaction AMP + ATP = 2 ADP. It functions in the pathway purine metabolism; AMP biosynthesis via salvage pathway; AMP from ADP: step 1/1. Functionally, catalyzes the reversible transfer of the terminal phosphate group between ATP and AMP. Plays an important role in cellular energy homeostasis and in adenine nucleotide metabolism. The chain is Adenylate kinase from Orientia tsutsugamushi (strain Ikeda) (Rickettsia tsutsugamushi).